The following is a 142-amino-acid chain: Hemoglobin F-I (142 aa).

In terms of domain architecture, Globin spans 2–142 (GLTTAQIKAI…AAGVLVAAMK (141 aa)). Histidine 95 serves as a coordination point for heme b.

It belongs to the globin family. In terms of assembly, homotetramer.

Its function is as follows. Hemoglobin F-I appears to function in storage, rather than transport of oxygen. This is Hemoglobin F-I from Urechis caupo (Innkeeper worm).